Reading from the N-terminus, the 830-residue chain is MKGYYNFADIEKKWQDKWEKDGLYKTQEETDKDNYYVLEMFPYPSGNLHMGHVRVYSIGDVIARFKRMNGYNVLHPMGWDAFGLPAENAAIKHGNIHPQDWTWDNIKNMKKQMKSLGLSYDWDREVTTAKEDYYKWTQWFFVKMFKKGLAYKKKAAVNWCPGCETVLANEQVVNNACERCGTEVEEKELEQWFFKITNYAERLLEDHKLLQNWPEKVKIMQRNWIGRSEGMRIKFPVKGSSEEIEVFTTRPDTIFGATYMVLAPEHPLVEKLISGTEKEKEVRQFIDRVKKQKEMERTSPESEKEGLFTGAYAINPMTGEEIPIMIANYVLMGYGTGAIMAVPAHDQRDFDFARKYDLPIRVVIQPEEREEELKDTDLNEAYEGSGHLINSDKYNGLTVKEAFDVMAEDMEKEGIGKREVNYRLRDWLISRQRYWGTPIPIVYCEKCGTVPVPEEELPVVLPRDVEFSPTGESPLAKVDEFVNTTCPVCGGKARRETDTMDTFVDSSWYFLRYTDPKNDKLPFSKENAKKWFPVDQYIGGIEHAILHLLYARFFTKVIYDMDMIDSVEPFTNWLAQGMVLKDGAKMSKSKGNVVDPEDILDRFGADTARLFILFAAPPEKDLEWSDRGVEGAERFLNRVWRLVADNIKEIKNTDQASLDVNSFNKNEKDLYRNLHVTIKRVTEDIGERLNFNTAISAIMELTNATYQYLNGVEKVNYTLIKDIIEKMLLILAPFAPHMTEELWSELGNDESIHIQKWPGYEEKALKKDEVTIVVQVNGKVRDKLQVSADIDEDKLKEQVLELPRIQKYTEGKEIVKTIIIPKKLVNIVVK.

The short motif at 42-52 (PYPSGNLHMGH) is the 'HIGH' region element. Residues 585-589 (KMSKS) carry the 'KMSKS' region motif. Lysine 588 provides a ligand contact to ATP.

This sequence belongs to the class-I aminoacyl-tRNA synthetase family.

The protein localises to the cytoplasm. The enzyme catalyses tRNA(Leu) + L-leucine + ATP = L-leucyl-tRNA(Leu) + AMP + diphosphate. This chain is Leucine--tRNA ligase, found in Halothermothrix orenii (strain H 168 / OCM 544 / DSM 9562).